Consider the following 211-residue polypeptide: Beta-crystallin B3 (211 aa).

N-acetylmethionine is present on M1. An N-acetylalanine; in Beta-crystallin B3, N-terminally processed modification is found at A2. The segment at 2 to 23 is N-terminal arm; sequence AEQHSTPEQAAAGKSHGGLGGS. Beta/gamma crystallin 'Greek key' domains are found at residues 24-63 and 64-108; these read YKVI…QVES and GPWL…RPLH. Residues 109-113 form a connecting peptide region; the sequence is IDGPD. Beta/gamma crystallin 'Greek key' domains follow at residues 114 to 155 and 156 to 198; these read HKLH…RAIN and GTWV…RRIR. Residues 200–211 form a C-terminal arm region; sequence QKWHKRGVFLSS.

It belongs to the beta/gamma-crystallin family. As to quaternary structure, homo/heterodimer, or complexes of higher-order. The structure of beta-crystallin oligomers seems to be stabilized through interactions between the N-terminal arms.

Functionally, crystallins are the dominant structural components of the vertebrate eye lens. In Bos taurus (Bovine), this protein is Beta-crystallin B3 (CRYBB3).